The chain runs to 709 residues: Probable serine/threonine-protein kinase zyg-1 (709 aa).

A Protein kinase domain is found at 13–251 (FQNLQQIGQG…LKEIVMTDYV (239 aa)). Residues 19-27 (IGQGGFGVV) and Lys-41 contribute to the ATP site. Asp-130 acts as the Proton acceptor in catalysis. Disordered stretches follow at residues 254 to 329 (KMGE…DRAR) and 591 to 633 (SSSQ…PAAT). 2 stretches are compositionally biased toward basic and acidic residues: residues 262 to 291 (SREH…ERRP) and 302 to 313 (SRRDPDGYRAAH). Residues 607 to 627 (PLSSRTTSSLNVRNGVSSDEN) are compositionally biased toward polar residues.

Belongs to the protein kinase superfamily. Ser/Thr protein kinase family.

The protein localises to the cytoplasm. Its subcellular location is the cytoskeleton. The protein resides in the microtubule organizing center. It localises to the centrosome. It is found in the centriole. It carries out the reaction L-seryl-[protein] + ATP = O-phospho-L-seryl-[protein] + ADP + H(+). The catalysed reaction is L-threonyl-[protein] + ATP = O-phospho-L-threonyl-[protein] + ADP + H(+). Protein kinase that plays a central role in centrosome duplication. Paternal copy is required to regulate synthesis of daughter centrioles prior to fertilization. Maternal copy regulates centrosome duplication during later cell cycles. Functions upstream of sas-5 and sas-6, and is required for their localization to the centrosome. This chain is Probable serine/threonine-protein kinase zyg-1 (zyg-1), found in Caenorhabditis briggsae.